A 290-amino-acid polypeptide reads, in one-letter code: Eukaryotic translation initiation factor 3 subunit G (290 aa).

Over residues Met1–Ala12 the composition is skewed to basic and acidic residues. Disordered stretches follow at residues Met1–Ala30 and Ala173–Ala192. In terms of domain architecture, RRM spans Pro204–Pro285.

The protein belongs to the eIF-3 subunit G family. In terms of assembly, component of the eukaryotic translation initiation factor 3 (eIF-3) complex.

The protein resides in the cytoplasm. Functionally, RNA-binding component of the eukaryotic translation initiation factor 3 (eIF-3) complex, which is involved in protein synthesis of a specialized repertoire of mRNAs and, together with other initiation factors, stimulates binding of mRNA and methionyl-tRNAi to the 40S ribosome. The eIF-3 complex specifically targets and initiates translation of a subset of mRNAs involved in cell proliferation. This subunit can bind 18S rRNA. This Cryptococcus neoformans var. neoformans serotype D (strain B-3501A) (Filobasidiella neoformans) protein is Eukaryotic translation initiation factor 3 subunit G.